Reading from the N-terminus, the 331-residue chain is MKVTVLAGGVGGARFLLGVQQLLGLGQFAANSAHSDADHQLSAVVNVGDDAWIHGLRVCPDLDTCMYTLGGGVDPQRGWGQRDETWHAMQELVRYGVQPDWFELGDRDLATHLVRTQMLQAGYPLSQITEALCDRWQPGARLLPATDDRCETHVVITDPVDESRKAIHFQEWWVRYRAQVPTHSFAFVGAEKSSAATEAIAALADADIIMLAPSNPVVSIGAILAVPGIRAALREATAPIVGYSPIIGEKPLRGMADTCLSVIGVDSTAAAVGRHYGARCATGILDCWLVHDGDHAEIDGVTVRSVPLLMTDPNATAEMVRAGCDLAGVVA.

Residue aspartate 63 participates in 7,8-didemethyl-8-hydroxy-5-deazariboflavin binding.

This sequence belongs to the CofD family. As to quaternary structure, homodimer. Mg(2+) is required as a cofactor.

The catalysed reaction is enolpyruvoyl-2-diphospho-5'-guanosine + 7,8-didemethyl-8-hydroxy-5-deazariboflavin = dehydro coenzyme F420-0 + GMP + H(+). Its pathway is cofactor biosynthesis; coenzyme F420 biosynthesis. In terms of biological role, catalyzes the transfer of the phosphoenolpyruvate moiety from enoylpyruvoyl-2-diphospho-5'-guanosine (EPPG) to 7,8-didemethyl-8-hydroxy-5-deazariboflavin (FO) with the formation of dehydro coenzyme F420-0 and GMP. The protein is Phosphoenolpyruvate transferase of Mycobacterium bovis (strain ATCC BAA-935 / AF2122/97).